The primary structure comprises 277 residues: Tryptophan synthase alpha chain (277 aa).

Active-site proton acceptor residues include glutamate 50 and aspartate 61.

It belongs to the TrpA family. In terms of assembly, tetramer of two alpha and two beta chains.

The catalysed reaction is (1S,2R)-1-C-(indol-3-yl)glycerol 3-phosphate + L-serine = D-glyceraldehyde 3-phosphate + L-tryptophan + H2O. Its pathway is amino-acid biosynthesis; L-tryptophan biosynthesis; L-tryptophan from chorismate: step 5/5. Functionally, the alpha subunit is responsible for the aldol cleavage of indoleglycerol phosphate to indole and glyceraldehyde 3-phosphate. The protein is Tryptophan synthase alpha chain of Beijerinckia indica subsp. indica (strain ATCC 9039 / DSM 1715 / NCIMB 8712).